An 82-amino-acid polypeptide reads, in one-letter code: Exodeoxyribonuclease 7 small subunit (82 aa).

Belongs to the XseB family. Heterooligomer composed of large and small subunits.

It localises to the cytoplasm. The catalysed reaction is Exonucleolytic cleavage in either 5'- to 3'- or 3'- to 5'-direction to yield nucleoside 5'-phosphates.. Bidirectionally degrades single-stranded DNA into large acid-insoluble oligonucleotides, which are then degraded further into small acid-soluble oligonucleotides. The protein is Exodeoxyribonuclease 7 small subunit of Mycobacterium avium (strain 104).